We begin with the raw amino-acid sequence, 232 residues long: Phosphatidylserine decarboxylase proenzyme (232 aa).

Ser190 acts as the Schiff-base intermediate with substrate; via pyruvic acid in catalysis. Ser190 is modified (pyruvic acid (Ser); by autocatalysis).

This sequence belongs to the phosphatidylserine decarboxylase family. PSD-A subfamily. Heterodimer of a large membrane-associated beta subunit and a small pyruvoyl-containing alpha subunit. The cofactor is pyruvate. Is synthesized initially as an inactive proenzyme. Formation of the active enzyme involves a self-maturation process in which the active site pyruvoyl group is generated from an internal serine residue via an autocatalytic post-translational modification. Two non-identical subunits are generated from the proenzyme in this reaction, and the pyruvate is formed at the N-terminus of the alpha chain, which is derived from the carboxyl end of the proenzyme. The post-translation cleavage follows an unusual pathway, termed non-hydrolytic serinolysis, in which the side chain hydroxyl group of the serine supplies its oxygen atom to form the C-terminus of the beta chain, while the remainder of the serine residue undergoes an oxidative deamination to produce ammonia and the pyruvoyl prosthetic group on the alpha chain.

It is found in the cell membrane. The catalysed reaction is a 1,2-diacyl-sn-glycero-3-phospho-L-serine + H(+) = a 1,2-diacyl-sn-glycero-3-phosphoethanolamine + CO2. Its pathway is phospholipid metabolism; phosphatidylethanolamine biosynthesis; phosphatidylethanolamine from CDP-diacylglycerol: step 2/2. Functionally, catalyzes the formation of phosphatidylethanolamine (PtdEtn) from phosphatidylserine (PtdSer). Important for establishment of root nodule symbiosis with the host plant. The protein is Phosphatidylserine decarboxylase proenzyme of Rhizobium meliloti (strain 1021) (Ensifer meliloti).